Reading from the N-terminus, the 325-residue chain is Terpene synthase 11 (325 aa).

Residues 97–102 carry the DDxx(x)D/E motif motif; it reads DDEYLE. The short motif at 227–235 is the NDxxSxxxD/E motif element; that stretch reads NDIYSFVKE.

Belongs to the terpene synthase family.

The catalysed reaction is (2E,6E)-farnesyl diphosphate = (E)-beta-farnesene + diphosphate. It catalyses the reaction (2E,6E)-farnesyl diphosphate = (3E,6E)-alpha-farnesene + diphosphate. The enzyme catalyses geranylgeranyl diphosphate + H2O = (S)-(+)-nephthenol + diphosphate. Functionally, terpene synthase that converts its substrate farnesyl diphosphate (FPP) into the sesquiterpenes (E)-beta-farnesene and (E,E)-alpha-farnesene. TPS11 also converts geranylgeranyl diphosphate (GGPP) into the diterpene (S)-nephthenol. This is Terpene synthase 11 from Dictyostelium purpureum (Slime mold).